The primary structure comprises 317 residues: UDP-3-O-acylglucosamine N-acyltransferase (317 aa).

Catalysis depends on H229, which acts as the Proton acceptor.

Belongs to the transferase hexapeptide repeat family. LpxD subfamily. As to quaternary structure, homotrimer.

The enzyme catalyses a UDP-3-O-[(3R)-3-hydroxyacyl]-alpha-D-glucosamine + a (3R)-hydroxyacyl-[ACP] = a UDP-2-N,3-O-bis[(3R)-3-hydroxyacyl]-alpha-D-glucosamine + holo-[ACP] + H(+). The protein operates within bacterial outer membrane biogenesis; LPS lipid A biosynthesis. In terms of biological role, catalyzes the N-acylation of UDP-3-O-acylglucosamine using 3-hydroxyacyl-ACP as the acyl donor. Is involved in the biosynthesis of lipid A, a phosphorylated glycolipid that anchors the lipopolysaccharide to the outer membrane of the cell. The protein is UDP-3-O-acylglucosamine N-acyltransferase of Campylobacter curvus (strain 525.92).